The sequence spans 345 residues: Trans-enoyl reductase tndF (345 aa).

The disordered stretch occupies residues 1–26; it reads MAREHQAAILPQPGGPLSVGMRPTPK. Residues 44–49, 168–171, 191–194, Y209, and 244–245 contribute to the NADP(+) site; these read CDYYQR, SSSV, SPEH, and LD.

This sequence belongs to the zinc-containing alcohol dehydrogenase family.

It participates in secondary metabolite biosynthesis; terpenoid biosynthesis. Trans-enoyl reductase; part of the gene cluster that mediates the biosynthesis of talaronoid C, a fusicoccane diterpenoid with an unprecedented tricyclic 5/8/6 ring system. The first step in the pathway is performed by the fusicoccadiene synthase tndC that possesses both prenyl transferase and terpene cyclase activity, converting isopentenyl diphosphate and dimethylallyl diphosphate into geranylgeranyl diphosphate (GGDP) and further converting GGDP into talarodiene, a precursor for talaronoid C. The remaining enzymes from the cluster include the cytochrome P450 monooxygenase tndB, the aldehyde reductase tndE and the alcohol dehydrogenase tndF that are involved in the conversion of talarodiene into talaronoid C. The chain is Trans-enoyl reductase tndF from Aspergillus flavipes.